A 104-amino-acid polypeptide reads, in one-letter code: Replication restart protein PriB (104 aa).

Residues 1–101 (MTNRLELSGV…LHADHIEIIC (101 aa)) form the SSB domain.

The protein belongs to the PriB family. In terms of assembly, homodimer. Interacts with PriA and DnaT. Component of the replication restart primosome. Primosome assembly occurs via a 'hand-off' mechanism. PriA binds to replication forks, subsequently PriB then DnaT bind; DnaT then displaces ssDNA to generate the helicase loading substrate.

Functionally, involved in the restart of stalled replication forks, which reloads the replicative helicase on sites other than the origin of replication; the PriA-PriB pathway is the major replication restart pathway. During primosome assembly it facilitates complex formation between PriA and DnaT on DNA; stabilizes PriA on DNA. Stimulates the DNA unwinding activity of PriA helicase. This is Replication restart protein PriB from Photobacterium profundum (strain SS9).